Consider the following 192-residue polypeptide: Orotate phosphoribosyltransferase (192 aa).

116–124 serves as a coordination point for 5-phospho-alpha-D-ribose 1-diphosphate; sequence EDIVTTGLS. The orotate site is built by threonine 120 and arginine 148.

This sequence belongs to the purine/pyrimidine phosphoribosyltransferase family. PyrE subfamily. In terms of assembly, homodimer. The cofactor is Mg(2+).

The catalysed reaction is orotidine 5'-phosphate + diphosphate = orotate + 5-phospho-alpha-D-ribose 1-diphosphate. It functions in the pathway pyrimidine metabolism; UMP biosynthesis via de novo pathway; UMP from orotate: step 1/2. Catalyzes the transfer of a ribosyl phosphate group from 5-phosphoribose 1-diphosphate to orotate, leading to the formation of orotidine monophosphate (OMP). The protein is Orotate phosphoribosyltransferase of Bartonella quintana (strain Toulouse) (Rochalimaea quintana).